The primary structure comprises 426 residues: D-ribulose kinase (426 aa).

Substrate contacts are provided by residues D8, 12–15 (SGAR), S72, and D221. ATP is bound by residues S243, G281, and 376-380 (GGAKN).

This sequence belongs to the FGGY kinase family. A divalent metal cation serves as cofactor.

It catalyses the reaction D-ribulose + ATP = D-ribulose 5-phosphate + ADP + H(+). Its function is as follows. Exhibits ATP hydrolysis without substrate. Phosphorylates D-ribulose. This is D-ribulose kinase from Synechococcus elongatus (strain ATCC 33912 / PCC 7942 / FACHB-805) (Anacystis nidulans R2).